Reading from the N-terminus, the 88-residue chain is Small ribosomal subunit protein bS16c (88 aa).

Belongs to the bacterial ribosomal protein bS16 family.

It is found in the plastid. The protein localises to the chloroplast. The chain is Small ribosomal subunit protein bS16c from Jasminum nudiflorum (Winter jasmine).